We begin with the raw amino-acid sequence, 106 residues long: Nucleoid-associated protein XAC1110 (106 aa).

The segment covering 80–89 has biased composition (basic and acidic residues); the sequence is KIDAESKDRM. Residues 80–106 are disordered; it reads KIDAESKDRMGSATAGMQLPPGMKLPF.

The protein belongs to the YbaB/EbfC family. In terms of assembly, homodimer.

Its subcellular location is the cytoplasm. The protein localises to the nucleoid. Its function is as follows. Binds to DNA and alters its conformation. May be involved in regulation of gene expression, nucleoid organization and DNA protection. In Xanthomonas axonopodis pv. citri (strain 306), this protein is Nucleoid-associated protein XAC1110.